We begin with the raw amino-acid sequence, 86 residues long: Cell division topological specificity factor (86 aa).

Belongs to the MinE family.

Functionally, prevents the cell division inhibition by proteins MinC and MinD at internal division sites while permitting inhibition at polar sites. This ensures cell division at the proper site by restricting the formation of a division septum at the midpoint of the long axis of the cell. This is Cell division topological specificity factor from Shewanella piezotolerans (strain WP3 / JCM 13877).